Here is a 455-residue protein sequence, read N- to C-terminus: SUN domain-containing protein 2 (455 aa).

Over residues 1-12 (MSASTVSITASP) the composition is skewed to polar residues. The interval 1 to 99 (MSASTVSITA…RTRKSQGNKI (99 aa)) is disordered. At Ser2 the chain carries N-acetylserine. The Nuclear portion of the chain corresponds to 2 to 105 (SASTVSITAS…GNKIDRGKWK (104 aa)). The residue at position 63 (Ser63) is a Phosphoserine. A compositionally biased stretch (low complexity) spans 74–88 (KSGSTATGTNTTTTQ). Residues 88–95 (QRRTRKSQ) carry the Nuclear localization signal motif. The helical transmembrane segment at 106–128 (TVVRVFAKQFGALLLLVGLIQLI) threads the bilayer. The Perinuclear space segment spans residues 129–455 (RKLTLKDSSL…ELDSVSVAHA (327 aa)). Positions 201–225 (LHSELKKVESKTERLQVSVDELNAK) form a coiled coil. The SUN domain occupies 285-447 (GGAFVMGHSD…YRFRVHGREL (163 aa)).

Forms homomers (e.g. dimers, trimers and tetramers) and heteromers with SUN1. Interacts with SUN3, SUN4 and TIK. Core component of the LINC complex which is composed of inner nuclear membrane SUN domain-containing proteins coupled to outer nuclear membrane WIP and WIT proteins. The LINC complex also involves nucleoskeletal proteins CRWN/LINC and possibly KAKU4 and the cytoskeletal myosin KAKU1. Interacts with LINC1, WIP1, WIP2 and WIP3 at the nuclear envelope (NE). Interacts with SINE1, SINE2, SINE3 and SINE4. Interacts with NEAP1, NEA2 and NEAP3. As to expression, expressed in roots, hypocotyls, cotyledons and leaves and inflorescences.

The protein resides in the nucleus inner membrane. It localises to the cytoplasm. Its subcellular location is the cytoskeleton. It is found in the phragmoplast. The protein localises to the endoplasmic reticulum membrane. The protein resides in the nucleus envelope. Its function is as follows. Component of SUN-protein-containing multivariate complexes also called LINC complexes which link the nucleoskeleton and cytoskeleton by providing versatile outer nuclear membrane attachment sites for cytoskeletal filaments. Required for the maintenance and/or formation of polarized nuclear shape in root hairs. Modulates the anchoring and mobility of WIP proteins in the nuclear envelope (NE). In association with SUN1, may be involved in telomere attachment to nuclear envelope in the prophase of meiosis. As component of the SUN-WIP-WIT2-KAKU1 complex, mediates the transfer of cytoplasmic forces to the nuclear envelope (NE), leading to nuclear shape changes. The sequence is that of SUN domain-containing protein 2 from Arabidopsis thaliana (Mouse-ear cress).